A 642-amino-acid chain; its full sequence is Forkhead box protein K2 (642 aa).

The 62-residue stretch at 30 to 91 (VTIGRNSSQG…NGVFVDGVFQ (62 aa)) folds into the FHA domain. Residues 201-221 (QSENDKDASGGDSPKDDSKPP) are disordered. A compositionally biased stretch (basic and acidic residues) spans 203-219 (ENDKDASGGDSPKDDSK). A DNA-binding region (fork-head) is located at residues 219 to 314 (KPPYSYAQLI…EQAFRKRRPR (96 aa)). Positions 261-279 (KGWQNSIRHNLSLNRYFIK) are DNA-binding; major groove. Mg(2+)-binding residues include L271, S272, N274, and F277. DNA-binding; minor groove stretches follow at residues 289–293 (KGSFW) and 309–314 (RKRRPR). Disordered regions lie at residues 323–359 (LGPL…REGS) and 589–615 (ASAS…KTDE). Composition is skewed to polar residues over residues 327–353 (SSRS…TPES) and 589–605 (ASAS…QSEQ). The segment covering 606-615 (PDIKRGKTDE) has biased composition (basic and acidic residues).

In terms of tissue distribution, in neurula embryos, expressed strongly in the future floor plate and weakly in the neural crest progenitor cells. As development progresses, expression becomes stronger in neural crest cells. At stage 24, expressed in the eye, brain, branchial arches and in the presomitic mesoderm in the posterior embryo. At stage 29, additionally expressed in the pronephric tubules. At stage 35, expressed in the migrating lateral muscle precursors of the abdomen. Additionally, the developing proctodeum and head structures including the branchial arches, eyes and otic vesicles continue to show expression. Expression also persists in the nephros.

It is found in the nucleus. The protein localises to the cytoplasm. In terms of biological role, transcriptional regulator involved in different processes such as glucose metabolism, aerobic glycolysis and autophagy. Recognizes and binds the forkhead DNA sequence motif (5'-GTAAACA-3') and can both act as a transcription activator or repressor, depending on the context. Acts as a key regulator of metabolic reprogramming towards aerobic glycolysis, a process in which glucose is converted to lactate in the presence of oxygen. Acts as a negative regulator of autophagy in skeletal muscle: in response to starvation, enters the nucleus, binds the promoters of autophagy genes and represses their expression, preventing proteolysis of skeletal muscle proteins. The sequence is that of Forkhead box protein K2 from Xenopus laevis (African clawed frog).